Consider the following 147-residue polypeptide: Catabolic 3-dehydroquinase 2 (147 aa).

Tyr23 functions as the Proton acceptor in the catalytic mechanism. Residues Asn74, His80, and Asp87 each contribute to the substrate site. His100 (proton donor) is an active-site residue. Substrate is bound by residues 101 to 102 and Arg111; that span reads IT.

Belongs to the type-II 3-dehydroquinase family. Homododecamer. Adopts a ring-like structure, composed of an arrangement of two hexameric rings stacked on top of one another.

The catalysed reaction is 3-dehydroquinate = 3-dehydroshikimate + H2O. Its pathway is aromatic compound metabolism; 3,4-dihydroxybenzoate biosynthesis; 3,4-dihydroxybenzoate from 3-dehydroquinate: step 1/2. In terms of biological role, is involved in the catabolism of quinate. Allows the utilization of quinate as carbon source via the beta-ketoadipate pathway. This Aspergillus terreus (strain NIH 2624 / FGSC A1156) protein is Catabolic 3-dehydroquinase 2.